Consider the following 116-residue polypeptide: Signal recognition particle 14 kDa protein (116 aa).

Belongs to the SRP14 family. In terms of assembly, heterodimer with ZK512.4/SRP9; binds RNA as heterodimer. Component of a signal recognition particle (SRP) complex that consists of a 7SL RNA molecule of 300 nucleotides and six protein subunits: srpa-72, srpa-68, SRP54, F37F2.2/SRP19, F25G6.8/SRP14 and ZK512.4/SRP9.

The protein resides in the cytoplasm. Its function is as follows. Component of the signal recognition particle (SRP) complex, a ribonucleoprotein complex that mediates the cotranslational targeting of secretory and membrane proteins to the endoplasmic reticulum (ER). F37F2.2/srpa-19 together with F25G6.8/srpa-14 and the Alu portion of the SRP RNA, constitutes the elongation arrest domain of SRP. The complex of F37F2.2/srpa-19 and F25G6.8/srpa-14 is required for SRP RNA binding. The polypeptide is Signal recognition particle 14 kDa protein (Caenorhabditis elegans).